Here is a 340-residue protein sequence, read N- to C-terminus: Putative pyridoxal kinase C18.10 (340 aa).

Substrate is bound by residues Ser-19 and Tyr-130. ATP-binding positions include 189–190 and 218–230; these read TS and QFPSLSGVFTGTG. Asp-231 is a substrate binding site.

The protein belongs to the pyridoxine kinase family. Requires a divalent metal cation as cofactor.

It localises to the cytoplasm. Its subcellular location is the nucleus. The enzyme catalyses pyridoxal + ATP = pyridoxal 5'-phosphate + ADP + H(+). Required for synthesis of pyridoxal-5-phosphate from vitamin B6. In Schizosaccharomyces pombe (strain 972 / ATCC 24843) (Fission yeast), this protein is Putative pyridoxal kinase C18.10.